The following is a 182-amino-acid chain: MIYPYKGKTPQIAASAFIADYVTITGDVVIGEETSIWFNTVIRGDVAPTVIGNRVNIQDNSILHQSPNNPLIIEDGVTVGHQVILHSAIVRKNALIGMGSIILDRAEIGEGAFIGAGSLVPPGKKIPPNTLALGRPAKVVRELTEDDIREMERIRREYVEKGQYYKALQQQRTSCADKKELP.

Mg(2+) is bound by residues His64, His81, and His86.

This sequence belongs to the gamma-class carbonic anhydrase family. As to quaternary structure, homotrimer. Requires Mg(2+) as cofactor. Zn(2+) serves as cofactor.

The enzyme catalyses hydrogencarbonate + H(+) = CO2 + H2O. Reversible hydration of carbon dioxide. This chain is Carbonic anhydrase, found in Geobacillus kaustophilus (strain HTA426).